The chain runs to 444 residues: Methylenetetrahydrofolate--tRNA-(uracil-5-)-methyltransferase TrmFO (444 aa).

10–15 (GAGLAG) contributes to the FAD binding site.

This sequence belongs to the MnmG family. TrmFO subfamily. FAD is required as a cofactor.

The protein localises to the cytoplasm. It catalyses the reaction uridine(54) in tRNA + (6R)-5,10-methylene-5,6,7,8-tetrahydrofolate + NADH + H(+) = 5-methyluridine(54) in tRNA + (6S)-5,6,7,8-tetrahydrofolate + NAD(+). The enzyme catalyses uridine(54) in tRNA + (6R)-5,10-methylene-5,6,7,8-tetrahydrofolate + NADPH + H(+) = 5-methyluridine(54) in tRNA + (6S)-5,6,7,8-tetrahydrofolate + NADP(+). Catalyzes the folate-dependent formation of 5-methyl-uridine at position 54 (M-5-U54) in all tRNAs. This is Methylenetetrahydrofolate--tRNA-(uracil-5-)-methyltransferase TrmFO from Streptococcus gordonii (strain Challis / ATCC 35105 / BCRC 15272 / CH1 / DL1 / V288).